The chain runs to 325 residues: MRNHAKISQVAHYLPKKIVTNDDLAQRMETSDEWIRSRTGIGQRHIVTGETTSDLASQVARKLLEKSQLDASEIDFIIVATITPDASMPSTAAMVQAAIGAKNAFAYDLVAACSGFVFALSTAEKLLASGVYKRGLVIGAETLSRSVDWSDRSTAVLFGDGAGGVLLEACEQPTFLAEILRTDGGRGASLTAGIDQKETPFSTQSCQQPFIQMEGRAIFEFATRDVTATMAELLEQADMTVDCVDYFLLHQANIRILDKMARKLGVAREKFPANMDKYGNTSAASLPILLSECVESGMLRLDGSQTILMAGFGGGLTWGTLLLQL.

Residues C113 and H250 contribute to the active site. The segment at 251–255 (QANIR) is ACP-binding. Residue N280 is part of the active site.

The protein belongs to the thiolase-like superfamily. FabH family. In terms of assembly, homodimer.

Its subcellular location is the cytoplasm. The enzyme catalyses malonyl-[ACP] + acetyl-CoA + H(+) = 3-oxobutanoyl-[ACP] + CO2 + CoA. Its pathway is lipid metabolism; fatty acid biosynthesis. Catalyzes the condensation reaction of fatty acid synthesis by the addition to an acyl acceptor of two carbons from malonyl-ACP. Catalyzes the first condensation reaction which initiates fatty acid synthesis and may therefore play a role in governing the total rate of fatty acid production. Possesses both acetoacetyl-ACP synthase and acetyl transacylase activities. Its substrate specificity determines the biosynthesis of branched-chain and/or straight-chain of fatty acids. The chain is Beta-ketoacyl-[acyl-carrier-protein] synthase III from Streptococcus suis (strain 98HAH33).